Consider the following 388-residue polypeptide: Chalcone synthase (388 aa).

Residue Cys164 is part of the active site.

The protein belongs to the thiolase-like superfamily. Chalcone/stilbene synthases family.

It catalyses the reaction (E)-4-coumaroyl-CoA + 3 malonyl-CoA + 3 H(+) = 2',4,4',6'-tetrahydroxychalcone + 3 CO2 + 4 CoA. Its pathway is secondary metabolite biosynthesis; flavonoid biosynthesis. Functionally, the primary product of this enzyme is 4,2',4',6'-tetrahydroxychalcone (also termed naringenin-chalcone or chalcone) which can under specific conditions spontaneously isomerize into naringenin. This Vigna unguiculata (Cowpea) protein is Chalcone synthase (CHS).